A 284-amino-acid chain; its full sequence is MVLMIVSGRSGSGKSVALRALEDMGFYCVDNLPVVLLPELARSLADRNISAAVSIDVRNMPESPEIFEQAMKNLPAEFSPQLLFLDADRNTLIRRYSDTRRLHPLSSKNLSLESAIDEESDLLEPLRSRADLIVDTSEMSVHELAEMLRTRLLGKRERELTMVFESFGFKHGIPIDADYVFDVRFLPNPHWDPKLRPMTGLDKPVAAFLDRHTEVHNFIYQTRSYLELWLPMLETNNRSYLTVAIGCTGGKHRSVYIAEQLADYFRSRGKNVQSRHRTLEKRKS.

8–15 (GRSGSGKS) serves as a coordination point for ATP. 56-59 (DVRN) is a GTP binding site. An RNA-binding region spans residues 266 to 284 (RSRGKNVQSRHRTLEKRKS).

It belongs to the RapZ-like family. RapZ subfamily. In terms of assembly, homotrimer.

In terms of biological role, modulates the synthesis of GlmS, by affecting the processing and stability of the regulatory small RNA GlmZ. When glucosamine-6-phosphate (GlcN6P) concentrations are high in the cell, RapZ binds GlmZ and targets it to cleavage by RNase E. Consequently, GlmZ is inactivated and unable to activate GlmS synthesis. Under low GlcN6P concentrations, RapZ is sequestered and inactivated by an other regulatory small RNA, GlmY, preventing GlmZ degradation and leading to synthesis of GlmS. This Klebsiella oxytoca protein is RNase adapter protein RapZ.